Consider the following 301-residue polypeptide: Rhodopsin (301 aa).

Residues 1-18 (LHMIHLHWYQYPPMNPMM) are Extracellular-facing. The chain crosses the membrane as a helical span at residues 19-43 (YPLLLIFMLFTGILCLAGNFVTIWV). At 44-55 (FMNTKSLRTPAN) the chain is on the cytoplasmic side. A helical membrane pass occupies residues 56 to 78 (LLVVNLAMSDFLMMFTMFPPMMV). Residues 79-92 (TCYYHTWTLGPTFC) lie on the Extracellular side of the membrane. A disulfide bridge links Cys-92 with Cys-169. Residues 93-115 (QVYAFLGNLCGCASIWTMVFITF) traverse the membrane as a helical segment. The short motif at 116-118 (DRY) is the 'Ionic lock' involved in activated form stabilization element. Residues 116–134 (DRYNVIVKGVAGEPLSTKK) lie on the Cytoplasmic side of the membrane. Residues 135-155 (ASLWILSVWVLSTAWCIAPFF) form a helical membrane-spanning segment. Residues 156–182 (GWNHYVPEGNLTGCGTDYLSEDILSRS) lie on the Extracellular side of the membrane. N-linked (GlcNAc...) asparagine glycosylation occurs at Asn-165. A helical membrane pass occupies residues 183–204 (YLYIYSTWVYFLPLAITIYCYV). The Cytoplasmic portion of the chain corresponds to 205–245 (FIIKAVAAHEKGMRDQAKKMGIKSLRNEEAQKTSAECRLAK). The helical transmembrane segment at 246–267 (NAMTTVALWFIAWTPCLLINWV) threads the bilayer. The Extracellular portion of the chain corresponds to 268-278 (GMFARSYLSPV). The chain crosses the membrane as a helical span at residues 279-300 (YTIWGYVFAKANAVYNPIVYAI). Lys-288 is subject to N6-(retinylidene)lysine.

The protein belongs to the G-protein coupled receptor 1 family. Opsin subfamily. In terms of assembly, homodimer. Interacts with GNAQ. Contains one covalently linked retinal chromophore.

It is found in the cell projection. The protein localises to the rhabdomere membrane. Photoreceptor required for image-forming vision at low light intensity. Can use both retinal and 3-dehydroretinal as visual pigment. Light-induced isomerization of 11-cis to all-trans retinal triggers a conformational change that activates signaling via G-proteins. Signaling via GNAQ probably mediates the activation of phospholipase C. This Cambarus hubrichti (Salem cave crayfish) protein is Rhodopsin (RHO).